We begin with the raw amino-acid sequence, 150 residues long: Ribonuclease H (150 aa).

The RNase H type-1 domain occupies 2–143; sequence PAPILDIFVD…ADELANRAIE (142 aa). Mg(2+) contacts are provided by aspartate 11, glutamate 49, aspartate 71, and aspartate 135.

It belongs to the RNase H family. In terms of assembly, monomer. The cofactor is Mg(2+).

The protein localises to the cytoplasm. The catalysed reaction is Endonucleolytic cleavage to 5'-phosphomonoester.. Functionally, endonuclease that specifically degrades the RNA of RNA-DNA hybrids. In Dichelobacter nodosus (strain VCS1703A), this protein is Ribonuclease H.